A 396-amino-acid polypeptide reads, in one-letter code: Elongation factor Tu 1 (396 aa).

The 197-residue stretch at 10–206 folds into the tr-type G domain; sequence KPHVNIGTIG…AVDEYIPTPE (197 aa). The segment at 19–26 is G1; it reads GHVDHGKT. 19-26 serves as a coordination point for GTP; sequence GHVDHGKT. Thr26 is a Mg(2+) binding site. Positions 60 to 64 are G2; the sequence is GITIN. The tract at residues 81 to 84 is G3; it reads DCPG. Residues 81 to 85 and 136 to 139 contribute to the GTP site; these read DCPGH and NKVD. The G4 stretch occupies residues 136 to 139; it reads NKVD. The G5 stretch occupies residues 174–176; that stretch reads SAL.

This sequence belongs to the TRAFAC class translation factor GTPase superfamily. Classic translation factor GTPase family. EF-Tu/EF-1A subfamily. As to quaternary structure, monomer.

The protein localises to the cytoplasm. The enzyme catalyses GTP + H2O = GDP + phosphate + H(+). GTP hydrolase that promotes the GTP-dependent binding of aminoacyl-tRNA to the A-site of ribosomes during protein biosynthesis. In Hyphomonas neptunium (strain ATCC 15444), this protein is Elongation factor Tu 1.